We begin with the raw amino-acid sequence, 198 residues long: tRNA (pseudouridine(54)-N(1))-methyltransferase (198 aa).

S-adenosyl-L-methionine contacts are provided by residues Leu130, Gly153, 176 to 181 (LSPLEL), and Cys186.

The protein belongs to the methyltransferase superfamily. TrmY family. As to quaternary structure, homodimer.

It localises to the cytoplasm. It catalyses the reaction pseudouridine(54) in tRNA + S-adenosyl-L-methionine = N(1)-methylpseudouridine(54) in tRNA + S-adenosyl-L-homocysteine + H(+). Its function is as follows. Specifically catalyzes the N1-methylation of pseudouridine at position 54 (Psi54) in tRNAs. The polypeptide is tRNA (pseudouridine(54)-N(1))-methyltransferase (Methanococcus maripaludis (strain C7 / ATCC BAA-1331)).